The primary structure comprises 314 residues: Basic endochitinase (314 aa).

Residues 1-20 (MGLWALVAFCLLSLILVGSA) form the signal peptide. The region spanning 21 to 61 (EQCGGQAGGRVCPGGACCSKFGWCGNTADYCGSGCQSQCSS) is the Chitin-binding type-1 domain. 7 disulfide bridges follow: cysteine 23/cysteine 38, cysteine 32/cysteine 44, cysteine 37/cysteine 51, cysteine 55/cysteine 59, cysteine 86/cysteine 148, cysteine 160/cysteine 168, and cysteine 267/cysteine 299. The Proton donor role is filled by glutamate 130.

It belongs to the glycosyl hydrolase 19 family. Chitinase class I subfamily.

It catalyses the reaction Random endo-hydrolysis of N-acetyl-beta-D-glucosaminide (1-&gt;4)-beta-linkages in chitin and chitodextrins.. Defense against chitin-containing fungal pathogens. The sequence is that of Basic endochitinase (CHIT1B) from Vitis vinifera (Grape).